A 201-amino-acid polypeptide reads, in one-letter code: Probable molybdenum cofactor guanylyltransferase (201 aa).

GTP-binding positions include 6–8 (LAG), lysine 18, aspartate 65, and aspartate 97. Position 97 (aspartate 97) interacts with Mg(2+).

This sequence belongs to the MobA family. Mg(2+) serves as cofactor.

It is found in the cytoplasm. It carries out the reaction Mo-molybdopterin + GTP + H(+) = Mo-molybdopterin guanine dinucleotide + diphosphate. Functionally, transfers a GMP moiety from GTP to Mo-molybdopterin (Mo-MPT) cofactor (Moco or molybdenum cofactor) to form Mo-molybdopterin guanine dinucleotide (Mo-MGD) cofactor. In Staphylococcus haemolyticus (strain JCSC1435), this protein is Probable molybdenum cofactor guanylyltransferase.